The sequence spans 591 residues: L-fucose isomerase (591 aa).

Residues E337 and D361 each act as proton acceptor in the active site. Residues E337, D361, and H528 each coordinate Mn(2+).

Belongs to the L-fucose isomerase family. Homohexamer. The cofactor is Mn(2+).

Its subcellular location is the cytoplasm. It carries out the reaction L-fucose = L-fuculose. It participates in carbohydrate degradation; L-fucose degradation; L-lactaldehyde and glycerone phosphate from L-fucose: step 1/3. Functionally, converts the aldose L-fucose into the corresponding ketose L-fuculose. In Klebsiella pneumoniae subsp. pneumoniae (strain ATCC 700721 / MGH 78578), this protein is L-fucose isomerase.